The chain runs to 498 residues: NAD(P)H-quinone oxidoreductase chain 4, chloroplastic (498 aa).

14 helical membrane-spanning segments follow: residues L4–L24, L37–L57, M87–V107, V111–S131, I134–M154, F167–L187, I207–I227, H242–I262, F274–I294, I305–D325, A331–I351, L386–T406, I417–L437, and I461–V481.

Belongs to the complex I subunit 4 family.

It is found in the plastid. Its subcellular location is the chloroplast thylakoid membrane. It catalyses the reaction a plastoquinone + NADH + (n+1) H(+)(in) = a plastoquinol + NAD(+) + n H(+)(out). The enzyme catalyses a plastoquinone + NADPH + (n+1) H(+)(in) = a plastoquinol + NADP(+) + n H(+)(out). The protein is NAD(P)H-quinone oxidoreductase chain 4, chloroplastic of Psilotum nudum (Whisk fern).